Reading from the N-terminus, the 348-residue chain is Dihydroorotase (348 aa).

Positions 17 and 19 each coordinate Zn(2+). Substrate contacts are provided by residues 19–21 and N45; that span reads HLR. Zn(2+)-binding residues include K103, H140, and H178. N6-carboxylysine is present on K103. H140 contacts substrate. L223 is a binding site for substrate. Zn(2+) is bound at residue D251. D251 is an active-site residue. 2 residues coordinate substrate: H255 and A267.

Belongs to the metallo-dependent hydrolases superfamily. DHOase family. Class II DHOase subfamily. As to quaternary structure, homodimer. Zn(2+) is required as a cofactor.

The catalysed reaction is (S)-dihydroorotate + H2O = N-carbamoyl-L-aspartate + H(+). It functions in the pathway pyrimidine metabolism; UMP biosynthesis via de novo pathway; (S)-dihydroorotate from bicarbonate: step 3/3. In terms of biological role, catalyzes the reversible cyclization of carbamoyl aspartate to dihydroorotate. The chain is Dihydroorotase from Serratia proteamaculans (strain 568).